A 494-amino-acid chain; its full sequence is Hepatic triacylglycerol lipase (494 aa).

Positions 1-21 (MGNHLQISVSLVLCIFIQSSA) are cleaved as a signal peptide. The N-linked (GlcNAc...) asparagine glycan is linked to Asn-79. Ser-169 functions as the Nucleophile in the catalytic mechanism. The Charge relay system role is filled by Asp-195. The segment at 255 to 278 (CHFLELYKHIAEHGLNAITQTINC) is essential for determining substrate specificity. Catalysis depends on His-280, which acts as the Charge relay system. The PLAT domain maps to 353 to 487 (YHYQFKIQFI…HPTQEKVFVK (135 aa)). N-linked (GlcNAc...) asparagine glycosylation is present at Asn-398.

The protein belongs to the AB hydrolase superfamily. Lipase family. As to quaternary structure, homodimer.

Its subcellular location is the secreted. The enzyme catalyses a triacylglycerol + H2O = a diacylglycerol + a fatty acid + H(+). It carries out the reaction a 1-acyl-sn-glycero-3-phosphocholine + H2O = sn-glycerol 3-phosphocholine + a fatty acid + H(+). It catalyses the reaction a 1,2-diacyl-sn-glycero-3-phosphocholine + H2O = a 2-acyl-sn-glycero-3-phosphocholine + a fatty acid + H(+). The catalysed reaction is 1,2-di-(9Z-octadecenoyl)-sn-glycerol + H2O = 2-(9Z-octadecenoyl)-glycerol + (9Z)-octadecenoate + H(+). The enzyme catalyses 1,2,3-tri-(9Z-octadecenoyl)-glycerol + H2O = 2,3-di-(9Z)-octadecenoyl-sn-glycerol + (9Z)-octadecenoate + H(+). It carries out the reaction 1-(9Z-octadecenoyl)-sn-glycero-3-phospho-L-serine + H2O = sn-glycero-3-phospho-L-serine + (9Z)-octadecenoate + H(+). It catalyses the reaction 1-hexadecanoyl-sn-glycero-3-phosphocholine + H2O = sn-glycerol 3-phosphocholine + hexadecanoate + H(+). The catalysed reaction is 1,3-di-(9Z-octadecenoyl)-glycerol + H2O = 3-(9Z-octadecenoyl)-sn-glycerol + (9Z)-octadecenoate + H(+). The enzyme catalyses 1,2,3-tri-(9Z-octadecenoyl)-glycerol + H2O = di-(9Z)-octadecenoylglycerol + (9Z)-octadecenoate + H(+). It carries out the reaction 1,2-di-(9Z-octadecenoyl)-sn-glycero-3-phosphocholine + H2O = (9Z-octadecenoyl)-sn-glycero-3-phosphocholine + (9Z)-octadecenoate + H(+). It catalyses the reaction 1,2,3-tributanoylglycerol + H2O = dibutanoylglycerol + butanoate + H(+). The catalysed reaction is 1,2-dihexadecanoyl-sn-glycero-3-phosphocholine + H2O = hexadecanoyl-sn-glycero-3-phosphocholine + hexadecanoate + H(+). Its activity is regulated as follows. Phospholipase A1 and lysophospholipase activities are inhibited by annexin II. Functionally, catalyzes the hydrolysis of triglycerides and phospholipids present in circulating plasma lipoproteins, including chylomicrons, intermediate density lipoproteins (IDL), low density lipoproteins (LDL) of large size and high density lipoproteins (HDL), releasing free fatty acids (FFA) and smaller lipoprotein particles. Also exhibits lysophospholipase activity. Can hydrolyze both neutral lipid and phospholipid substrates but shows a greater binding affinity for neutral lipid substrates than phospholipid substrates. In native LDL, preferentially hydrolyzes the phosphatidylcholine species containing polyunsaturated fatty acids at sn-2 position. This Rattus norvegicus (Rat) protein is Hepatic triacylglycerol lipase (Lipc).